Here is a 462-residue protein sequence, read N- to C-terminus: Argininosuccinate lyase (462 aa).

Belongs to the lyase 1 family. Argininosuccinate lyase subfamily.

The protein resides in the cytoplasm. The enzyme catalyses 2-(N(omega)-L-arginino)succinate = fumarate + L-arginine. It participates in amino-acid biosynthesis; L-arginine biosynthesis; L-arginine from L-ornithine and carbamoyl phosphate: step 3/3. The sequence is that of Argininosuccinate lyase from Prochlorococcus marinus (strain SARG / CCMP1375 / SS120).